The primary structure comprises 304 residues: Ribonuclease Z (304 aa).

Residues His-63, His-65, Asp-67, His-68, His-143, Asp-213, and His-271 each contribute to the Zn(2+) site. Asp-67 serves as the catalytic Proton acceptor.

The protein belongs to the RNase Z family. In terms of assembly, homodimer. Zn(2+) serves as cofactor.

The catalysed reaction is Endonucleolytic cleavage of RNA, removing extra 3' nucleotides from tRNA precursor, generating 3' termini of tRNAs. A 3'-hydroxy group is left at the tRNA terminus and a 5'-phosphoryl group is left at the trailer molecule.. Functionally, zinc phosphodiesterase, which displays some tRNA 3'-processing endonuclease activity. Probably involved in tRNA maturation, by removing a 3'-trailer from precursor tRNA. The sequence is that of Ribonuclease Z from Parabacteroides distasonis (strain ATCC 8503 / DSM 20701 / CIP 104284 / JCM 5825 / NCTC 11152).